A 118-amino-acid chain; its full sequence is Large ribosomal subunit protein uL24 (118 aa).

This sequence belongs to the universal ribosomal protein uL24 family. As to quaternary structure, part of the 50S ribosomal subunit.

One of two assembly initiator proteins, it binds directly to the 5'-end of the 23S rRNA, where it nucleates assembly of the 50S subunit. In terms of biological role, one of the proteins that surrounds the polypeptide exit tunnel on the outside of the subunit. This chain is Large ribosomal subunit protein uL24, found in Prochlorococcus marinus (strain MIT 9215).